Reading from the N-terminus, the 232-residue chain is tRNA1(Val) (adenine(37)-N6)-methyltransferase (232 aa).

This sequence belongs to the methyltransferase superfamily. tRNA (adenine-N(6)-)-methyltransferase family.

Its subcellular location is the cytoplasm. The catalysed reaction is adenosine(37) in tRNA1(Val) + S-adenosyl-L-methionine = N(6)-methyladenosine(37) in tRNA1(Val) + S-adenosyl-L-homocysteine + H(+). Its function is as follows. Specifically methylates the adenine in position 37 of tRNA(1)(Val) (anticodon cmo5UAC). The polypeptide is tRNA1(Val) (adenine(37)-N6)-methyltransferase (Haemophilus influenzae (strain 86-028NP)).